A 341-amino-acid polypeptide reads, in one-letter code: Trimethylamine N-oxide transport system ATP-binding protein TmoW (341 aa).

The 260-residue stretch at 6–265 folds into the ABC transporter domain; that stretch reads IKCESVYKIF…PATEYVRKFT (260 aa). 61 to 68 contributes to the ATP binding site; it reads GLSGSGKS.

The protein belongs to the ABC transporter superfamily. In terms of assembly, the complex is probably composed of two ATP-binding proteins (TmoW), two transmembrane proteins (TmoV) and a solute-binding protein (TmoX).

Its subcellular location is the cell inner membrane. The enzyme catalyses a quaternary ammonium(out) + ATP + H2O = a quaternary ammonium(in) + ADP + phosphate + H(+). Part of the ABC transporter complex TmoXWV involved in trimethylamine N-oxide (TMAO) import. Responsible for energy coupling to the transport system. The chain is Trimethylamine N-oxide transport system ATP-binding protein TmoW from Pelagibacter ubique (strain HTCC1062).